We begin with the raw amino-acid sequence, 264 residues long: Hemin import ATP-binding protein HmuV (264 aa).

An ABC transporter domain is found at 10 to 246 (LQAQNLSYSI…HTLRKWYQAD (237 aa)). Residue 42 to 49 (GPNGAGKS) participates in ATP binding.

Belongs to the ABC transporter superfamily. Heme (hemin) importer (TC 3.A.1.14.5) family. The complex is composed of two ATP-binding proteins (HmuV), two transmembrane proteins (HmuU) and a solute-binding protein (HmuT).

It localises to the cell inner membrane. Functionally, part of the ABC transporter complex HmuTUV involved in hemin import. Responsible for energy coupling to the transport system. This Photorhabdus laumondii subsp. laumondii (strain DSM 15139 / CIP 105565 / TT01) (Photorhabdus luminescens subsp. laumondii) protein is Hemin import ATP-binding protein HmuV.